Consider the following 160-residue polypeptide: S-protein homolog 13 (160 aa).

A signal peptide spans 1–27 (MGRDLGWCFFVATVLLAAVLLPAPTIA).

This sequence belongs to the plant self-incompatibility (S1) protein family.

The protein resides in the secreted. This Arabidopsis thaliana (Mouse-ear cress) protein is S-protein homolog 13.